We begin with the raw amino-acid sequence, 277 residues long: Coiled-coil domain-containing protein 117 (277 aa).

The disordered stretch occupies residues 22-69 (SPPAFAGRAFPPGAAGHDLAPRPGVRGPPSSPDGRTARGRVSIHCRKK). Low complexity predominate over residues 23–55 (PPAFAGRAFPPGAAGHDLAPRPGVRGPPSSPDG). An Omega-N-methylarginine modification is found at R47. S52 is subject to Phosphoserine. The segment covering 58–69 (ARGRVSIHCRKK) has biased composition (basic residues). Positions 139–166 (QCEVARRRLQEIEDRIIDEDEEVESDRN) form a coiled coil. 2 disordered regions span residues 216–242 (LSEK…ATGT) and 255–277 (QCTD…EMEL). Over residues 225–242 (NPKNYMGESQTKHTATGT) the composition is skewed to polar residues.

Interacts with CIAO2B; the interaction is direct. Interacts with MMS19; the interaction is indirect.

The protein localises to the cytoplasm. It is found in the cytoskeleton. Its subcellular location is the spindle. It localises to the nucleus. In terms of biological role, facilitates DNA repair, cell cycle progression, and cell proliferation through its interaction with CIAO2B. This Rattus norvegicus (Rat) protein is Coiled-coil domain-containing protein 117.